Here is a 217-residue protein sequence, read N- to C-terminus: CASP-like protein UU4 (217 aa).

The span at 1-11 (MYTGQSDHRPE) shows a compositional bias: basic and acidic residues. The tract at residues 1–21 (MYTGQSDHRPEGVGVNPGSPN) is disordered. Residues 1–61 (MYTGQSDHRP…VKKNINHMSG (61 aa)) are Cytoplasmic-facing. A helical transmembrane segment spans residues 62-82 (LSLGLRVSEFVLSVIAFSLMA). Topologically, residues 83–98 (SAEQNGAVYSTFTSYS) are extracellular. A helical membrane pass occupies residues 99–119 (FVLAINVLVALYAIGQIILSV). Residues 120 to 141 (MPLVSGSAPKKLYLFITFGCDQ) lie on the Cytoplasmic side of the membrane. A helical transmembrane segment spans residues 142–162 (LSAFLLMAAGAAGASVAMLIN). At 163-187 (RKGVIDDYGSGCIDGKITVFCAHAE) the chain is on the extracellular side. Residues 188–208 (ASIAFTFLSFFCVMISSYLGV) traverse the membrane as a helical segment. The Cytoplasmic segment spans residues 209–217 (YNLAPYLIL).

Belongs to the Casparian strip membrane proteins (CASP) family. As to quaternary structure, homodimer and heterodimers.

The protein resides in the cell membrane. This chain is CASP-like protein UU4, found in Physcomitrium patens (Spreading-leaved earth moss).